Here is a 268-residue protein sequence, read N- to C-terminus: MCERSLYRAGYVGSLLNLQSPDSFYFSNLRANGSQLAALPPISYPRSALPWATTPASCTPAQPATASAFGGFSQPYLTGSGPIGLQSPGAKDGPEDQVKFYTPDAPTASEERSRTRPPFAPESSLVHSALKGTKYDYAGVGRTAPGSATLLQGAPCASSFKEDTKGPLNLNMAVQVAGVASCLRSSLPDGLPWGAAPGRARKKRKPYTKQQIAELENEFLVNEFINRQKRKELSNRLNLSDQQVKIWFQNRRMKKKRVVQREQALALY.

The disordered stretch occupies residues 102–124 (TPDAPTASEERSRTRPPFAPESS). The segment at residues 200–259 (ARKKRKPYTKQQIAELENEFLVNEFINRQKRKELSNRLNLSDQQVKIWFQNRRMKKKRVV) is a DNA-binding region (homeobox).

The protein belongs to the Abd-B homeobox family.

It is found in the nucleus. In terms of biological role, sequence-specific transcription factor which is part of a developmental regulatory system that provides cells with specific positional identities on the anterior-posterior axis. The chain is Homeobox protein Hox-D12 (Hoxd12) from Mus musculus (Mouse).